A 255-amino-acid chain; its full sequence is Thiazole synthase (255 aa).

The active-site Schiff-base intermediate with DXP is the Lys96. 1-deoxy-D-xylulose 5-phosphate is bound by residues Gly157, 183–184 (AG), and 205–206 (NT).

This sequence belongs to the ThiG family. In terms of assembly, homotetramer. Forms heterodimers with either ThiH or ThiS.

Its subcellular location is the cytoplasm. It catalyses the reaction [ThiS sulfur-carrier protein]-C-terminal-Gly-aminoethanethioate + 2-iminoacetate + 1-deoxy-D-xylulose 5-phosphate = [ThiS sulfur-carrier protein]-C-terminal Gly-Gly + 2-[(2R,5Z)-2-carboxy-4-methylthiazol-5(2H)-ylidene]ethyl phosphate + 2 H2O + H(+). Its pathway is cofactor biosynthesis; thiamine diphosphate biosynthesis. In terms of biological role, catalyzes the rearrangement of 1-deoxy-D-xylulose 5-phosphate (DXP) to produce the thiazole phosphate moiety of thiamine. Sulfur is provided by the thiocarboxylate moiety of the carrier protein ThiS. In vitro, sulfur can be provided by H(2)S. The polypeptide is Thiazole synthase (Staphylococcus haemolyticus (strain JCSC1435)).